Consider the following 209-residue polypeptide: Ribonuclease HII (209 aa).

Residues 6-209 enclose the RNase H type-2 domain; it reads SLEAGIDEAG…IKRMTNSRLF (204 aa). The a divalent metal cation site is built by aspartate 12, glutamate 13, and aspartate 108.

This sequence belongs to the RNase HII family. It depends on Mn(2+) as a cofactor. The cofactor is Mg(2+).

It is found in the cytoplasm. The catalysed reaction is Endonucleolytic cleavage to 5'-phosphomonoester.. In terms of biological role, endonuclease that specifically degrades the RNA of RNA-DNA hybrids. This is Ribonuclease HII from Caldivirga maquilingensis (strain ATCC 700844 / DSM 13496 / JCM 10307 / IC-167).